The following is a 367-amino-acid chain: 1-deoxy-D-xylulose 5-phosphate reductoisomerase (367 aa).

Thr-10, Gly-11, Ser-12, Ile-13, Gly-34, Lys-35, Asn-36, and Asn-112 together coordinate NADPH. Position 113 (Lys-113) interacts with 1-deoxy-D-xylulose 5-phosphate. Glu-114 provides a ligand contact to NADPH. Mn(2+) is bound at residue Asp-138. 1-deoxy-D-xylulose 5-phosphate-binding residues include Ser-139, Glu-140, Ser-164, and His-186. Residue Glu-140 participates in Mn(2+) binding. Gly-192 is an NADPH binding site. Residues Ser-199, Asn-204, Lys-205, and Glu-208 each coordinate 1-deoxy-D-xylulose 5-phosphate. Glu-208 contributes to the Mn(2+) binding site.

It belongs to the DXR family. The cofactor is Mg(2+). It depends on Mn(2+) as a cofactor.

The catalysed reaction is 2-C-methyl-D-erythritol 4-phosphate + NADP(+) = 1-deoxy-D-xylulose 5-phosphate + NADPH + H(+). The protein operates within isoprenoid biosynthesis; isopentenyl diphosphate biosynthesis via DXP pathway; isopentenyl diphosphate from 1-deoxy-D-xylulose 5-phosphate: step 1/6. Functionally, catalyzes the NADPH-dependent rearrangement and reduction of 1-deoxy-D-xylulose-5-phosphate (DXP) to 2-C-methyl-D-erythritol 4-phosphate (MEP). In Thermus thermophilus (strain ATCC BAA-163 / DSM 7039 / HB27), this protein is 1-deoxy-D-xylulose 5-phosphate reductoisomerase.